A 236-amino-acid chain; its full sequence is (5-formylfuran-3-yl)methyl phosphate synthase (236 aa).

Lys-27 serves as the catalytic Schiff-base intermediate with substrate. Lys-85 acts as the Proton acceptor in catalysis.

The protein belongs to the MfnB family.

It carries out the reaction 2 D-glyceraldehyde 3-phosphate = 4-(hydroxymethyl)-2-furancarboxaldehyde phosphate + phosphate + 2 H2O. Its pathway is cofactor biosynthesis; methanofuran biosynthesis. In terms of biological role, catalyzes the formation of 4-(hydroxymethyl)-2-furancarboxaldehyde phosphate (4-HFC-P) from two molecules of glyceraldehyde-3-P (GA-3-P). The polypeptide is (5-formylfuran-3-yl)methyl phosphate synthase (Methanothermobacter thermautotrophicus (strain ATCC 29096 / DSM 1053 / JCM 10044 / NBRC 100330 / Delta H) (Methanobacterium thermoautotrophicum)).